The chain runs to 176 residues: NAD(P)H-quinone oxidoreductase subunit 6, chloroplastic (176 aa).

5 helical membrane passes run 10–30 (FILV…VLLP), 32–52 (PIYS…LYIL), 61–81 (AQLL…VMFL), 95–115 (VGDG…ITTI), and 152–172 (FLIP…GAIA).

Belongs to the complex I subunit 6 family. NDH is composed of at least 16 different subunits, 5 of which are encoded in the nucleus.

Its subcellular location is the plastid. It is found in the chloroplast thylakoid membrane. It catalyses the reaction a plastoquinone + NADH + (n+1) H(+)(in) = a plastoquinol + NAD(+) + n H(+)(out). It carries out the reaction a plastoquinone + NADPH + (n+1) H(+)(in) = a plastoquinol + NADP(+) + n H(+)(out). Functionally, NDH shuttles electrons from NAD(P)H:plastoquinone, via FMN and iron-sulfur (Fe-S) centers, to quinones in the photosynthetic chain and possibly in a chloroplast respiratory chain. The immediate electron acceptor for the enzyme in this species is believed to be plastoquinone. Couples the redox reaction to proton translocation, and thus conserves the redox energy in a proton gradient. The polypeptide is NAD(P)H-quinone oxidoreductase subunit 6, chloroplastic (ndhG) (Trachelium caeruleum (Blue throatwort)).